The chain runs to 1597 residues: Pentafunctional AROM polypeptide (1597 aa).

The segment at 1 to 384 is 3-dehydroquinate synthase; the sequence is MGVPTKISIL…HEPRASTVSN (384 aa). NAD(+)-binding positions include 44–46, 81–84, 114–116, and D119; these read DTN, ESSK, and GGV. 7-phospho-2-dehydro-3-deoxy-D-arabino-heptonate is bound at residue R130. 139-140 serves as a coordination point for NAD(+); that stretch reads TT. 7-phospho-2-dehydro-3-deoxy-D-arabino-heptonate contacts are provided by D146 and K152. An NAD(+)-binding site is contributed by K161. A 7-phospho-2-dehydro-3-deoxy-D-arabino-heptonate-binding site is contributed by N162. Residues 179 to 182 and N190 contribute to the NAD(+) site; that span reads FLNT. E194 provides a ligand contact to Zn(2+). 7-phospho-2-dehydro-3-deoxy-D-arabino-heptonate-binding positions include 194 to 197 and K250; that span reads EVIK. E260 functions as the Proton acceptor; for 3-dehydroquinate synthase activity in the catalytic mechanism. Residues 264 to 268 and H271 contribute to the 7-phospho-2-dehydro-3-deoxy-D-arabino-heptonate site; that span reads RNLLN. Residue H271 coordinates Zn(2+). Residue H275 is the Proton acceptor; for 3-dehydroquinate synthase activity of the active site. Positions 287 and 356 each coordinate 7-phospho-2-dehydro-3-deoxy-D-arabino-heptonate. H287 is a binding site for Zn(2+). An EPSP synthase region spans residues 397–842; that stretch reads VSPGVPKNLN…WDSLAQTFKV (446 aa). The active-site For EPSP synthase activity is the C824. Residues 866 to 1057 are shikimate kinase; sequence ASIFIIGMRG…RSKENTFFVS (192 aa). 872-879 contacts ATP; the sequence is GMRGAGKT. The interval 1058 to 1278 is 3-dehydroquinase; that stretch reads LTLPDLAPAA…AAPGQLSARE (221 aa). H1181 (proton acceptor; for 3-dehydroquinate dehydratase activity) is an active-site residue. K1209 serves as the catalytic Schiff-base intermediate with substrate; for 3-dehydroquinate dehydratase activity. The segment at 1291 to 1597 is shikimate dehydrogenase; the sequence is SKKFAVIGNP…VQPKDDDIST (307 aa).

The protein in the N-terminal section; belongs to the sugar phosphate cyclases superfamily. Dehydroquinate synthase family. It in the 2nd section; belongs to the EPSP synthase family. This sequence in the 3rd section; belongs to the shikimate kinase family. In the 4th section; belongs to the type-I 3-dehydroquinase family. The protein in the C-terminal section; belongs to the shikimate dehydrogenase family. In terms of assembly, homodimer. Zn(2+) serves as cofactor.

The protein resides in the cytoplasm. The catalysed reaction is 7-phospho-2-dehydro-3-deoxy-D-arabino-heptonate = 3-dehydroquinate + phosphate. It carries out the reaction 3-dehydroquinate = 3-dehydroshikimate + H2O. The enzyme catalyses shikimate + NADP(+) = 3-dehydroshikimate + NADPH + H(+). It catalyses the reaction shikimate + ATP = 3-phosphoshikimate + ADP + H(+). The catalysed reaction is 3-phosphoshikimate + phosphoenolpyruvate = 5-O-(1-carboxyvinyl)-3-phosphoshikimate + phosphate. It functions in the pathway metabolic intermediate biosynthesis; chorismate biosynthesis; chorismate from D-erythrose 4-phosphate and phosphoenolpyruvate: step 2/7. It participates in metabolic intermediate biosynthesis; chorismate biosynthesis; chorismate from D-erythrose 4-phosphate and phosphoenolpyruvate: step 3/7. Its pathway is metabolic intermediate biosynthesis; chorismate biosynthesis; chorismate from D-erythrose 4-phosphate and phosphoenolpyruvate: step 4/7. The protein operates within metabolic intermediate biosynthesis; chorismate biosynthesis; chorismate from D-erythrose 4-phosphate and phosphoenolpyruvate: step 5/7. It functions in the pathway metabolic intermediate biosynthesis; chorismate biosynthesis; chorismate from D-erythrose 4-phosphate and phosphoenolpyruvate: step 6/7. Functionally, the AROM polypeptide catalyzes 5 consecutive enzymatic reactions in prechorismate polyaromatic amino acid biosynthesis. The chain is Pentafunctional AROM polypeptide from Ajellomyces dermatitidis (strain ER-3 / ATCC MYA-2586) (Blastomyces dermatitidis).